The following is a 1413-amino-acid chain: Zinc finger protein 609 (1413 aa).

5 disordered regions span residues 1-26, 47-196, 354-484, 517-659, and 695-765; these read MSLS…SGDE, QKLE…GRGS, RFCD…EPTL, AHAH…RPIA, and PNSP…AAGD. Phosphoserine is present on residues Ser-358, Ser-361, and Ser-379. Position 381 is a phosphothreonine (Thr-381). Residues 386-405 are compositionally biased toward low complexity; it reads AAAASDSKGTSSSSKTRAGA. Ser-413, Ser-433, Ser-446, Ser-452, Ser-467, and Ser-470 each carry phosphoserine. The span at 423–437 shows a compositional bias: polar residues; it reads ASSTSEDVKASPSSA. A Glycyl lysine isopeptide (Lys-Gly) (interchain with G-Cter in SUMO2) cross-link involves residue Lys-479. The C2H2-type zinc-finger motif lies at 495-520; that stretch reads IDCPHPNCNKKYKHINGLKYHQAHAH. Over residues 519–529 the composition is skewed to basic and acidic residues; that stretch reads AHTDDDSKPEA. Ser-533, Ser-575, and Ser-577 each carry phosphoserine. Basic and acidic residues predominate over residues 625–648; sequence SLERKCMEKEKCKKPSSLKSEKIP. Residues 725-735 are compositionally biased toward basic residues; that stretch reads DKKKKDKKKKD. Position 742 is a phosphoserine (Ser-742). Residue Thr-745 is modified to Phosphothreonine. The segment covering 750 to 763 has biased composition (basic and acidic residues); it reads CRAEEGKSPFRDAA. Ser-757 is modified (phosphoserine). Residue Lys-788 forms a Glycyl lysine isopeptide (Lys-Gly) (interchain with G-Cter in SUMO2) linkage. Polar residues predominate over residues 797–843; the sequence is FTDNAPSPSIGGSSRLDSTTPTQPLTPLHVVTQNGAEASSVKTNSPA. Disordered stretches follow at residues 797-962, 1004-1127, 1154-1221, and 1273-1369; these read FTDN…VIQQ, YEEQ…RQAE, IKSE…SPLT, and SKVS…STHH. At Ser-803 the chain carries Phosphoserine. At Thr-822 the chain carries Phosphothreonine. Ser-841, Ser-845, and Ser-848 each carry phosphoserine. Positions 854 to 875 are enriched in basic and acidic residues; the sequence is GEGKVDSAKSKDPEQLVKEGAK. Over residues 902-916 the composition is skewed to polar residues; it reads YAQSSPGTLTSSSQA. Positions 925–949 are enriched in basic and acidic residues; the sequence is TKKDEEPESVEGKVKNDVCEEKKPE. Positions 950–962 are enriched in polar residues; it reads LSNSSQQPSVIQQ. Basic and acidic residues predominate over residues 1022–1044; that stretch reads GLDKKTEMGLKEREASLKEEWKQ. Ser-1057 carries the post-translational modification Phosphoserine. Lys-1063 participates in a covalent cross-link: Glycyl lysine isopeptide (Lys-Gly) (interchain with G-Cter in SUMO2). Basic and acidic residues-rich tracts occupy residues 1099–1115, 1154–1189, and 1197–1210; these read LKGK…EASE, IKSE…KEST, and PSEE…EPRP. Lys-1155 participates in a covalent cross-link: Glycyl lysine isopeptide (Lys-Gly) (interchain with G-Cter in SUMO2). The segment covering 1288–1298 has biased composition (polar residues); the sequence is PSVSCKASSES. Residue Lys-1299 forms a Glycyl lysine isopeptide (Lys-Gly) (interchain with G-Cter in SUMO2) linkage. Over residues 1330–1348 the composition is skewed to gly residues; that stretch reads GCGVVGGGGSCGSVAGAGG.

Interacts (via N-terminus) with NIPBL. Interacts with the multiprotein complex Integrator. In terms of tissue distribution, expressed in myoblasts. Expressed in neurons in various brain regions, including striatum, prefrontal cortex, olfactory bulb, midbrain, cerebellum and hippocampus. Expressed in neural stem cells (at protein level). Expressed in thymocytes.

It localises to the nucleus. Its function is as follows. Transcription factor, which activates RAG1, and possibly RAG2, transcription. Through the regulation of RAG1/2 expression, may regulate thymocyte maturation. Along with NIPBL and the multiprotein complex Integrator, promotes cortical neuron migration during brain development by regulating the transcription of crucial genes in this process. Preferentially binds promoters containing paused RNA polymerase II. Up-regulates the expression of SEMA3A, NRP1, PLXND1 and GABBR2 genes, among others. Involved in regulation of myoblast proliferation during myogenesis. The polypeptide is Zinc finger protein 609 (Znf609) (Mus musculus (Mouse)).